Consider the following 401-residue polypeptide: Canavanine gamma-lyase (401 aa).

The residue at position 214 (Lys214) is an N6-(pyridoxal phosphate)lysine.

This sequence belongs to the trans-sulfuration enzymes family. Requires pyridoxal 5'-phosphate as cofactor.

It catalyses the reaction L-canavanine + H2O = N-hydroxyguanidine + L-homoserine. Functionally, lyase involved in the degradation of canavanine, the delta-oxa-analog of arginine, allowing growth on canavanine as sole nitrogen and carbon source. Catalyzes the elimination of hydroxyguanidine from canavanine with a subsequent water addition to yield homoserine. In Rhizobium leguminosarum bv. trifolii (strain WSM2304), this protein is Canavanine gamma-lyase.